The primary structure comprises 108 residues: FK506-binding protein 1 (108 aa).

The region spanning 20-108 (GDNVTIHYVG…KFEVELLKVN (89 aa)) is the PPIase FKBP-type domain.

Belongs to the FKBP-type PPIase family. FKBP1 subfamily.

It localises to the cytoplasm. The catalysed reaction is [protein]-peptidylproline (omega=180) = [protein]-peptidylproline (omega=0). Inhibited by both FK506 and rapamycin. In terms of biological role, PPIases accelerate the folding of proteins. It catalyzes the cis-trans isomerization of proline imidic peptide bonds in oligopeptides. This chain is FK506-binding protein 1 (FRR1), found in Cryptococcus neoformans var. grubii serotype A (strain H99 / ATCC 208821 / CBS 10515 / FGSC 9487) (Filobasidiella neoformans var. grubii).